The sequence spans 167 residues: Effector CFEM8 (167 aa).

The first 17 residues, 1-17 (MQFSIVVMAALASLASA), serve as a signal peptide directing secretion. One can recognise a CFEM domain in the interval 18-112 (QSMDGIPTCA…TPAAAAPYPT (95 aa)). Intrachain disulfides connect Cys-26–Cys-68, Cys-30–Cys-63, Cys-40–Cys-47, and Cys-49–Cys-85. Heme is bound at residue Asp-44. N-linked (GlcNAc...) asparagine glycosylation is found at Asn-117 and Asn-135. Gly-143 carries the GPI-anchor amidated glycine lipid modification. Positions 144–167 (SAPQNVAGGLAGIFGLVVAAAFAL) are cleaved as a propeptide — removed in mature form.

Belongs to the RBT5 family.

Its subcellular location is the cell membrane. It localises to the secreted. The protein resides in the host nucleus. The protein localises to the host cell membrane. In terms of biological role, appears to function during host infection, and may play a role in suppressing the host immune response. This Marssonina brunnea f. sp. multigermtubi (strain MB_m1) (Marssonina leaf spot fungus) protein is Effector CFEM8.